The primary structure comprises 181 residues: Large ribosomal subunit protein uL16 (181 aa).

This sequence belongs to the universal ribosomal protein uL16 family.

The protein is Large ribosomal subunit protein uL16 of Pyrococcus horikoshii (strain ATCC 700860 / DSM 12428 / JCM 9974 / NBRC 100139 / OT-3).